The sequence spans 152 residues: SKP1-like protein 12 (152 aa).

Positions 94–152 (ILAANYLNIKSLFDLTCQTVADMIKGKTPEEIRSTFNIENDFTPEEEEAVRKENQWAFE) are interaction with the F-box domain of F-box proteins.

The protein belongs to the SKP1 family. As to quaternary structure, part of a SCF (SKP1-cullin-F-box) protein ligase complex. Interacts with ADO3/FKF1, COI1/FBL2, EBF1/FBL6, PP2B10, At3g61590 and At5g49610. As to expression, expressed in young seedlings, roots, leaves, floral stems, inflorescences, and siliques, with a slightly higher level in inflorescence than in other tissues.

The protein resides in the nucleus. Its pathway is protein modification; protein ubiquitination. In terms of biological role, involved in ubiquitination and subsequent proteasomal degradation of target proteins. Together with CUL1, RBX1 and a F-box protein, it forms a SCF E3 ubiquitin ligase complex. The functional specificity of this complex depends on the type of F-box protein. In the SCF complex, it serves as an adapter that links the F-box protein to CUL1. Plays a role during early flowers reproductive development. The polypeptide is SKP1-like protein 12 (ASK12) (Arabidopsis thaliana (Mouse-ear cress)).